The chain runs to 327 residues: Phenylalanine--tRNA ligase alpha subunit (327 aa).

Mg(2+) is bound at residue E252.

It belongs to the class-II aminoacyl-tRNA synthetase family. Phe-tRNA synthetase alpha subunit type 1 subfamily. In terms of assembly, tetramer of two alpha and two beta subunits. Mg(2+) serves as cofactor.

It is found in the cytoplasm. The enzyme catalyses tRNA(Phe) + L-phenylalanine + ATP = L-phenylalanyl-tRNA(Phe) + AMP + diphosphate + H(+). The protein is Phenylalanine--tRNA ligase alpha subunit of Tolumonas auensis (strain DSM 9187 / NBRC 110442 / TA 4).